We begin with the raw amino-acid sequence, 402 residues long: Phosphoglycerate kinase (402 aa).

Substrate-binding positions include 24–26, Arg40, 63–66, Arg122, and Arg155; these read DFN and HFGR. Residues Lys206, Gly297, Glu328, and 357-360 each bind ATP; that span reads GGDS.

This sequence belongs to the phosphoglycerate kinase family. In terms of assembly, monomer.

It is found in the cytoplasm. The catalysed reaction is (2R)-3-phosphoglycerate + ATP = (2R)-3-phospho-glyceroyl phosphate + ADP. It functions in the pathway carbohydrate degradation; glycolysis; pyruvate from D-glyceraldehyde 3-phosphate: step 2/5. The sequence is that of Phosphoglycerate kinase from Synechococcus sp. (strain RCC307).